Here is a 125-residue protein sequence, read N- to C-terminus: Cytochrome c-556 (125 aa).

Heme contacts are provided by methionine 13, cysteine 113, cysteine 116, and histidine 117. Residues methionine 13, cysteine 113, cysteine 116, and histidine 117 each coordinate heme c.

As to quaternary structure, monomer. In terms of processing, binds 1 heme c group covalently per subunit.

Low-spin monoheme cytochrome c. The protein is Cytochrome c-556 of Agrobacterium tumefaciens (strain apple 185).